A 659-amino-acid polypeptide reads, in one-letter code: uncharacterized protein (659 aa).

16 helical membrane-spanning segments follow: residues 24–44, 71–91, 115–135, 157–177, 183–203, 214–234, 242–262, 279–299, 311–331, 365–385, 393–413, 433–453, 490–510, 517–537, 550–570, and 596–616; these read TTLM…YGLF, FGAS…VMMV, IGWL…DSGV, RAWI…RVII, FVLL…GNAG, AVIV…TAAL, AVLI…AELV, LGLV…WALV, LTAL…VQTA, FDSL…AGFV, TWPV…VFTS, MTLN…TLAL, FILF…DTLV, EFMA…IIGI, IGLL…LMTM, and IGGA…IVAL.

This sequence to M.tuberculosis Rv0102.

The protein resides in the cell membrane. This is an uncharacterized protein from Mycobacterium leprae (strain TN).